Reading from the N-terminus, the 411-residue chain is CCA-adding enzyme (411 aa).

The ATP site is built by G8 and R11. CTP-binding residues include G8 and R11. Residues E21 and D23 each coordinate Mg(2+). ATP-binding residues include R91, R137, and R140. CTP is bound by residues R91, R137, and R140. Residues 227 to 328 enclose the HD domain; the sequence is LGNQTMTRLS…MTIFQAFDCW (102 aa).

The protein belongs to the tRNA nucleotidyltransferase/poly(A) polymerase family. Bacterial CCA-adding enzyme type 2 subfamily. Requires Mg(2+) as cofactor.

It carries out the reaction a tRNA precursor + 2 CTP + ATP = a tRNA with a 3' CCA end + 3 diphosphate. The catalysed reaction is a tRNA with a 3' CCA end + 2 CTP + ATP = a tRNA with a 3' CCACCA end + 3 diphosphate. Its function is as follows. Catalyzes the addition and repair of the essential 3'-terminal CCA sequence in tRNAs without using a nucleic acid template. Adds these three nucleotides in the order of C, C, and A to the tRNA nucleotide-73, using CTP and ATP as substrates and producing inorganic pyrophosphate. tRNA 3'-terminal CCA addition is required both for tRNA processing and repair. Also involved in tRNA surveillance by mediating tandem CCA addition to generate a CCACCA at the 3' terminus of unstable tRNAs. While stable tRNAs receive only 3'-terminal CCA, unstable tRNAs are marked with CCACCA and rapidly degraded. This Blochmanniella floridana protein is CCA-adding enzyme.